A 586-amino-acid chain; its full sequence is Chaperonin 60 subunit alpha 1, chloroplastic (586 aa).

A chloroplast-targeting transit peptide spans 1–46 (MASANALSSASVLCSSRQSKLGGGNQQQGQRVSYNKRTIRRFSVRA). Ser-90 is modified (phosphoserine).

It belongs to the chaperonin (HSP60) family. As to quaternary structure, part of the Cpn60 complex composed of 7 alpha and 7 beta subunits. This complex shows ATPase activity. The Cpn60 complex interacts with the Cpn10 complex. In terms of tissue distribution, expressed in leaves, stems, siliques and flowers.

Its subcellular location is the plastid. The protein resides in the chloroplast. Functionally, binds RuBisCO small and large subunits and is implicated in the assembly of the enzyme oligomer. Involved in protein assisted folding. Required for proper chloroplast development. The polypeptide is Chaperonin 60 subunit alpha 1, chloroplastic (CPN60A1) (Arabidopsis thaliana (Mouse-ear cress)).